A 470-amino-acid polypeptide reads, in one-letter code: ATP synthase subunit beta (470 aa).

155-162 (GGAGVGKT) is an ATP binding site.

It belongs to the ATPase alpha/beta chains family. In terms of assembly, F-type ATPases have 2 components, CF(1) - the catalytic core - and CF(0) - the membrane proton channel. CF(1) has five subunits: alpha(3), beta(3), gamma(1), delta(1), epsilon(1). CF(0) has three main subunits: a(1), b(2) and c(9-12). The alpha and beta chains form an alternating ring which encloses part of the gamma chain. CF(1) is attached to CF(0) by a central stalk formed by the gamma and epsilon chains, while a peripheral stalk is formed by the delta and b chains.

It localises to the cell membrane. The catalysed reaction is ATP + H2O + 4 H(+)(in) = ADP + phosphate + 5 H(+)(out). In terms of biological role, produces ATP from ADP in the presence of a proton gradient across the membrane. The catalytic sites are hosted primarily by the beta subunits. This Pectinatus frisingensis protein is ATP synthase subunit beta.